Reading from the N-terminus, the 132-residue chain is Small ribosomal subunit protein uS15 (132 aa).

It belongs to the universal ribosomal protein uS15 family. As to quaternary structure, part of the 30S ribosomal subunit.

The polypeptide is Small ribosomal subunit protein uS15 (Methanobrevibacter smithii (strain ATCC 35061 / DSM 861 / OCM 144 / PS)).